The following is a 263-amino-acid chain: Small ribosomal subunit protein eS4, Y isoform 1 (263 aa).

One can recognise an S4 RNA-binding domain in the interval 42 to 104 (LPLIIFLRNR…TGEHFRLVYD (63 aa)).

The protein belongs to the eukaryotic ribosomal protein eS4 family.

This Monodelphis domestica (Gray short-tailed opossum) protein is Small ribosomal subunit protein eS4, Y isoform 1 (RPS4Y1).